A 535-amino-acid chain; its full sequence is CTP synthase (535 aa).

Residues 1–268 (MSTKYIFVTG…DQIVCDHLKL (268 aa)) are amidoligase domain. Ser-14 serves as a coordination point for CTP. A UTP-binding site is contributed by Ser-14. 15–20 (SMGKGI) lines the ATP pocket. Tyr-55 provides a ligand contact to L-glutamine. An ATP-binding site is contributed by Asp-72. Asp-72 and Glu-142 together coordinate Mg(2+). CTP-binding positions include 149-151 (DME), 189-194 (KTKIAQ), and Lys-225. UTP-binding positions include 189 to 194 (KTKIAQ) and Lys-225. The Glutamine amidotransferase type-1 domain occupies 293-535 (KIALVGKYVE…FIRVAVENSK (243 aa)). Gly-355 is an L-glutamine binding site. Cys-382 functions as the Nucleophile; for glutamine hydrolysis in the catalytic mechanism. L-glutamine-binding positions include 383 to 386 (LGMQ), Glu-406, and Arg-464. Residues His-509 and Glu-511 contribute to the active site.

The protein belongs to the CTP synthase family. Homotetramer.

The enzyme catalyses UTP + L-glutamine + ATP + H2O = CTP + L-glutamate + ADP + phosphate + 2 H(+). The catalysed reaction is L-glutamine + H2O = L-glutamate + NH4(+). It catalyses the reaction UTP + NH4(+) + ATP = CTP + ADP + phosphate + 2 H(+). It functions in the pathway pyrimidine metabolism; CTP biosynthesis via de novo pathway; CTP from UDP: step 2/2. With respect to regulation, allosterically activated by GTP, when glutamine is the substrate; GTP has no effect on the reaction when ammonia is the substrate. The allosteric effector GTP functions by stabilizing the protein conformation that binds the tetrahedral intermediate(s) formed during glutamine hydrolysis. Inhibited by the product CTP, via allosteric rather than competitive inhibition. Catalyzes the ATP-dependent amination of UTP to CTP with either L-glutamine or ammonia as the source of nitrogen. Regulates intracellular CTP levels through interactions with the four ribonucleotide triphosphates. This chain is CTP synthase, found in Lactococcus lactis subsp. lactis (strain IL1403) (Streptococcus lactis).